Consider the following 560-residue polypeptide: MNWSFLLQLVITILLIVLGANWLLSSFLLDFKRDLTGVALSQQSSISSVRKENETAYYRSILVPTGFPLTTGLGLSLKYKIRNGNFGDVWNAIMEVSKGKNIIKFTGREKSYSLSELNGMAKRIFPKLSNKNFKNIGIANSIATVEGFTLSLASMMTSIRTGSIPHFLPAVPRQRLEDVDVLIIDSWKSFKMLNGSEDWYKLIVVCDDPIESLQFDANCDVITWKELIDGFTKDTEYQYTPPDDNSDDKKLFAYVTSPWNGTNSFNQICLVSNIAEFIKGFPLGNELNSNEYLTISTKLANSSASLQIWGKLFAVLLHGGSASFINPTTIDCESLQETTLLFTETKDVVKLIDSNSRSGLLNKIYLSWATNLLSEGIFTKIARIEPHSLEKLRCVYLADNVKDAEVISTFPEKIPQLKKTNRRITPSTEQLNKIRAQLGSRVVLELYCPYAIMGPVAHTNFYDYRVFGKSVDDNVVCYGTLSTTLEGKMVETETNPHLNIEKKQGMLCIRGFSIGKPVESDRLEKALHLAERFGGGEGWMPLVGVFGLFGQDGCLYIYNQ.

5 helical membrane passes run 9-29 (LVIT…SFLL), 61-81 (ILVP…KYKI), 136-156 (IGIA…ASMM), 305-325 (SLQI…ASFI), and 442-462 (VVLE…TNFY).

Its subcellular location is the membrane. This is an uncharacterized protein from Saccharomyces cerevisiae (strain ATCC 204508 / S288c) (Baker's yeast).